The following is a 287-amino-acid chain: Survival motor neuron protein (287 aa).

Positions 1 to 28 (MGGGGGGFPEPEDSVLFRRGTGESDDSD) are disordered. The tract at residues 9–40 (PEPEDSVLFRRGTGESDDSDVWDDTALIKAYD) is P1 (binding site for GEMIN2). Thr21 carries the post-translational modification Phosphothreonine. A phosphoserine mark is found at Ser24 and Ser27. Lys47 is covalently cross-linked (Glycyl lysine isopeptide (Lys-Gly) (interchain with G-Cter in SUMO2)). Disordered stretches follow at residues 51 to 86 (KNGDISEASEKPKGTPKRKSAKNKSQRKNTTSPSKQ) and 149 to 221 (NAQE…PPPH). Residues 64–77 (GTPKRKSAKNKSQR) show a composition bias toward basic residues. Thr65 carries the post-translational modification Phosphothreonine. Phosphothreonine; by PKA is present on Thr80. The 61-residue stretch at 86–146 (QWKVGDNCCA…LSPTSEVANI (61 aa)) folds into the Tudor domain. Residues 92–204 (NCCAIWSEDG…MPRSGLGPGK (113 aa)) form a required for interaction with RPP20/POP7 region. Low complexity predominate over residues 149–160 (NAQENENESQIS). Polar residues predominate over residues 167 to 179 (SSRSPLNKPNNIR). Lys204 is covalently cross-linked (Glycyl lysine isopeptide (Lys-Gly) (interchain with G-Cter in SUMO2)). Pro residues predominate over residues 211–221 (GPPPPPPPPPH). The tract at residues 234-261 (PPMIPPPPPICPDSLDDADALGSMLISW) is P2 (binding site for SM B). Residues 273-287 (GFKQSQKEGRYSHFN) form a required for interaction with SYNCRIP region.

The protein belongs to the SMN family. As to quaternary structure, homooligomer; may form higher order homooligomers in the dimer to octamer range. Part of the core SMN complex that contains SMN1, GEMIN2/SIP1, DDX20/GEMIN3, GEMIN4, GEMIN5, GEMIN6, GEMIN7, GEMIN8 and STRAP/UNRIP. Part of the SMN-Sm complex that contains SMN1, GEMIN2/SIP1, DDX20/GEMIN3, GEMIN4, GEMIN5, GEMIN6, GEMIN7, GEMIN8, STRAP/UNRIP and the Sm proteins SNRPB, SNRPD1, SNRPD2, SNRPD3, SNRPE, SNRPF and SNRPG. Component of an import snRNP complex composed of KPNB1, RNUT1, SMN1 and ZNF259. Interacts with DDX20, FBL, NOLA1, RNUT1, SYNCRIP and with several spliceosomal snRNP core Sm proteins, including SNRPB, SNRPD1, SNRPD2, SNRPD3, SNRPE and ILF3. Interacts with GEMIN2; the interaction is direct. Interacts with GEMIN3; the interaction is direct. Interacts with GEMIN8; the interaction is direct. Interacts with SNRPB; the interaction is direct. Interacts (via Tudor domain) with SNRPD1 (via C-terminus); the interaction is direct. Interacts with SNRPD2; the interaction is direct. Interacts (via Tudor domain) with SNRPD3 (via C-terminus); the interaction is direct. Interacts with SNRPE; the interaction is direct. Interacts with OSTF1, LSM10, LSM11 and RPP20/POP7. Interacts (via C-terminal region) with ZPR1 (via C-terminal region). Interacts (via Tudor domain) with COIL. Interacts with SETX; recruits SETX to POLR2A. Interacts with POLR2A (via the C-terminal domain (CTD)). Interacts with PRMT5. Interacts with XRN2. Interacts (via C-terminus) with FMR1 (via C-terminus); the interaction is direct and occurs in a RNA-independent manner. Interacts (via Tudor domain) with SF3B2 ('Arg-508'-methylated form). Interacts with WRAP53/TCAB1. Interacts (via Tudor domain) with ELAVL4 in an RNA-independent manner; the interaction is required for localization of ELAVL4 to RNA granules. Interacts with FRG1.

The protein resides in the nucleus. Its subcellular location is the gem. It is found in the cajal body. It localises to the cytoplasm. The protein localises to the cytoplasmic granule. The protein resides in the perikaryon. Its subcellular location is the cell projection. It is found in the neuron projection. It localises to the axon. The protein localises to the myofibril. The protein resides in the sarcomere. Its subcellular location is the z line. Functionally, the SMN complex catalyzes the assembly of small nuclear ribonucleoproteins (snRNPs), the building blocks of the spliceosome, and thereby plays an important role in the splicing of cellular pre-mRNAs. Most spliceosomal snRNPs contain a common set of Sm proteins SNRPB, SNRPD1, SNRPD2, SNRPD3, SNRPE, SNRPF and SNRPG that assemble in a heptameric protein ring on the Sm site of the small nuclear RNA to form the core snRNP (Sm core). In the cytosol, the Sm proteins SNRPD1, SNRPD2, SNRPE, SNRPF and SNRPG are trapped in an inactive 6S pICln-Sm complex by the chaperone CLNS1A that controls the assembly of the core snRNP. To assemble core snRNPs, the SMN complex accepts the trapped 5Sm proteins from CLNS1A forming an intermediate. Binding of snRNA inside 5Sm ultimately triggers eviction of the SMN complex, thereby allowing binding of SNRPD3 and SNRPB to complete assembly of the core snRNP. Within the SMN complex, SMN1 acts as a structural backbone and together with GEMIN2 it gathers the Sm complex subunits. Ensures the correct splicing of U12 intron-containing genes that may be important for normal motor and proprioceptive neurons development. Also required for resolving RNA-DNA hybrids created by RNA polymerase II, that form R-loop in transcription terminal regions, an important step in proper transcription termination. May also play a role in the metabolism of small nucleolar ribonucleoprotein (snoRNPs). This chain is Survival motor neuron protein (SMN1), found in Bos taurus (Bovine).